The sequence spans 215 residues: Nucleoside triphosphate pyrophosphatase (215 aa).

The Proton acceptor role is filled by Asp77.

It belongs to the Maf family. The cofactor is a divalent metal cation.

It localises to the cytoplasm. It catalyses the reaction a ribonucleoside 5'-triphosphate + H2O = a ribonucleoside 5'-phosphate + diphosphate + H(+). The catalysed reaction is a 2'-deoxyribonucleoside 5'-triphosphate + H2O = a 2'-deoxyribonucleoside 5'-phosphate + diphosphate + H(+). Nucleoside triphosphate pyrophosphatase. May have a dual role in cell division arrest and in preventing the incorporation of modified nucleotides into cellular nucleic acids. In Rickettsia africae (strain ESF-5), this protein is Nucleoside triphosphate pyrophosphatase.